The sequence spans 196 residues: MRQFVVLGHDAPTTPDFPLDDLPGAAGRLDVLCRCVSAALFVSHGIRDDVEVFLVLGDEVTVRIDAGAVQYMHPDERNVAGLLKQALDAKTEAIGHQEASSSPGIHVSKRGFEAVLDAVSGPVVALHEDGDALAAVDPLADPVFVLSDHRDFTAAEASLLADASDHRVRVGPTVLHADHAITVAHNHLDTAGFDAY.

Leu-126 lines the S-adenosyl-L-methionine pocket.

This sequence belongs to the methyltransferase superfamily. TrmY family. In terms of assembly, homodimer.

The protein localises to the cytoplasm. It catalyses the reaction pseudouridine(54) in tRNA + S-adenosyl-L-methionine = N(1)-methylpseudouridine(54) in tRNA + S-adenosyl-L-homocysteine + H(+). Specifically catalyzes the N1-methylation of pseudouridine at position 54 (Psi54) in tRNAs. The sequence is that of tRNA (pseudouridine(54)-N(1))-methyltransferase from Halobacterium salinarum (strain ATCC 700922 / JCM 11081 / NRC-1) (Halobacterium halobium).